We begin with the raw amino-acid sequence, 863 residues long: DNA mismatch repair protein MutS (863 aa).

607 to 614 (GPNMAGKS) provides a ligand contact to ATP.

The protein belongs to the DNA mismatch repair MutS family.

Its function is as follows. This protein is involved in the repair of mismatches in DNA. It is possible that it carries out the mismatch recognition step. This protein has a weak ATPase activity. The polypeptide is DNA mismatch repair protein MutS (Caldicellulosiruptor saccharolyticus (strain ATCC 43494 / DSM 8903 / Tp8T 6331)).